The following is a 170-amino-acid chain: Large ribosomal subunit protein uL10 (170 aa).

The protein belongs to the universal ribosomal protein uL10 family. As to quaternary structure, part of the ribosomal stalk of the 50S ribosomal subunit. The N-terminus interacts with L11 and the large rRNA to form the base of the stalk. The C-terminus forms an elongated spine to which L12 dimers bind in a sequential fashion forming a multimeric L10(L12)X complex.

Its function is as follows. Forms part of the ribosomal stalk, playing a central role in the interaction of the ribosome with GTP-bound translation factors. The protein is Large ribosomal subunit protein uL10 of Lactobacillus acidophilus (strain ATCC 700396 / NCK56 / N2 / NCFM).